Consider the following 2374-residue polypeptide: Genome polyprotein (2374 aa).

A lipid anchor (N-myristoyl glycine; by host) is attached at glycine 115. Disordered stretches follow at residues 144 to 176 and 707 to 739; these read GDMPTASTSEAPLGSNKGGSSTSPKSTSNGNVV and GADGAEVQPAPTSDLSDGNPTTDPAPRDNFDYP. Over residues 157-174 the composition is skewed to low complexity; it reads GSNKGGSSTSPKSTSNGN. Over residues 716-728 the composition is skewed to polar residues; the sequence is APTSDLSDGNPTT. In terms of domain architecture, SF3 helicase spans 1361–1525; the sequence is YSTALSAISL…VAFSAAAALQ (165 aa). 1387-1394 contributes to the ATP binding site; that stretch reads GPPGTGKS. Residue glycine 1600 is the site of N-myristoyl glycine; by host attachment. Residues 1649-1669 form a helical membrane-spanning segment; sequence IFAASSFLSLIAATLTIVRCL. Positions 1677–1699 are disordered; the sequence is GAYSGTPVPKPRKKDLPKQPVYS. Tyrosine 1679 is modified (O-(5'-phospho-RNA)-tyrosine). The Peptidase C3 domain occupies 1700–1889; the sequence is GPVRRQGFDP…FSARLTPERV (190 aa). Residues histidine 1748, glutamate 1779, and cysteine 1852 each act as for protease 3C activity in the active site. The RdRp catalytic domain maps to 2126-2243; that stretch reads SNVWSIDYSC…GSNQDFHPRE (118 aa). Catalysis depends on for RdRp activity residues aspartate 2132 and aspartate 2229.

As to quaternary structure, interacts with capsid protein VP1. Interacts with capsid protein VP3. In terms of assembly, interacts with capsid protein VP0. Interacts with capsid protein VP3. Interacts with capsid protein VP0. Interacts with capsid protein VP1. As to quaternary structure, homodimer. Interacts with protein 2B. Interacts with protein 2C. In terms of assembly, homodimer. Interacts with host ABCD3. Interacts with protein 2A. Interacts with host ACBD3. Homodimer. Interacts with host ABCD3. Interacts with protein 2A. Interacts with protein 3A. Interacts with protein 3C. Interacts with host ACBD3. As to quaternary structure, homodimer. Interacts with host ABCD3 (via GOLD domain) and PI4KB; these interactions allow the formation of a viral protein/ACBD3/PI4KB complex in order to synthesize PI4P at the viral RNA replication sites. Interacts with protein 2C. Interacts with protein 3C. Protein 3C: Interacts with protein 2A. Protein 3C: Interacts with protein 2C. Specific enzymatic cleavages by the viral protease in vivo yield a variety of precursors and mature proteins. The leader protein-VP0 junction is cleaved by 3C proteinase. The VP1/2A junction is cleaved by the protein 3CD in association with protein 2A. Post-translationally, uridylylated by the polymerase and is covalently linked to the 5'-end of genomic RNA. This uridylylated form acts as a nucleotide-peptide primer for the polymerase.

Its subcellular location is the virion. The protein localises to the host cytoplasm. It localises to the host cytoplasmic vesicle membrane. It is found in the host Golgi apparatus membrane. The enzyme catalyses Selective cleavage of Gln-|-Gly bond in the poliovirus polyprotein. In other picornavirus reactions Glu may be substituted for Gln, and Ser or Thr for Gly.. It carries out the reaction RNA(n) + a ribonucleoside 5'-triphosphate = RNA(n+1) + diphosphate. It catalyses the reaction ATP + H2O = ADP + phosphate + H(+). Required for viral RNA replication and viral RNA encapsidation. Does not have any proteolytic activity. In terms of biological role, forms an icosahedral capsid of pseudo T=3 symmetry with capsid proteins VP0 and VP3. Together they form an icosahedral capsid composed of 60 copies of each VP0, VP1, and VP3. All the three latter proteins contain a beta-sheet structure called beta-barrel jelly roll. Functionally, forms an icosahedral capsid of pseudo T=3 symmetry with capsid proteins VP1 and VP3. Together they form an icosahedral capsid composed of 60 copies of each VP0, VP1, and VP3. All the three latter proteins contain a beta-sheet structure called beta-barrel jelly roll. Its function is as follows. Forms an icosahedral capsid of pseudo T=3 symmetry with capsid proteins VP0 and VP1. Together they form an icosahedral capsid composed of 60 copies of each VP0, VP1, and VP3. All the three latter proteins contain a beta-sheet structure called beta-barrel jelly roll. Required for viral RNA replication. Does not have any proteolytic activity. In terms of biological role, affects membrane integrity and causes an increase in membrane permeability. Functionally, induces and associates with structural rearrangements of intracellular membranes. Displays RNA-binding, nucleotide binding and NTPase activities. May play a role in virion morphogenesis and viral RNA encapsidation by interacting with the capsid protein VP3. Its function is as follows. Serves as membrane anchor via its hydrophobic domain. Plays an essential role in viral RNA replication by recruiting PI4KB at the viral replication sites, thereby allowing the formation of rearranged membranous structures where viral replication takes place. Forms a primer, VPg-pU, which is utilized by the polymerase for the initiation of RNA chains. In terms of biological role, cysteine protease that generates mature viral proteins from the precursor polyprotein. In addition to its proteolytic activity, it binds to viral RNA, and thus influences viral genome replication. RNA and substrate cooperatively bind to the protease. Functionally, replicates the genomic and antigenomic RNAs by recognizing replications specific signals. Performs VPg uridylylation. The polypeptide is Genome polyprotein (Salivirus A (isolate Human/Nigeria/NG-J1/2007) (SV-A)).